A 63-amino-acid polypeptide reads, in one-letter code: Large ribosomal subunit protein bL28 (63 aa).

Belongs to the bacterial ribosomal protein bL28 family.

The sequence is that of Large ribosomal subunit protein bL28 from Syntrophotalea carbinolica (strain DSM 2380 / NBRC 103641 / GraBd1) (Pelobacter carbinolicus).